The chain runs to 441 residues: Protein cortex (441 aa).

WD repeat units lie at residues 110 to 148, 149 to 187, 193 to 233, 235 to 276, 277 to 320, 345 to 379, and 380 to 420; these read SITS…VDQG, QTMF…QFVQ, IQIC…KSLV, IEGA…RFMK, TNEI…KLRQ, SLWS…ESHT, and GLNR…KILA. The D-box signature appears at 379 to 390; that stretch reads TGLNRIRTMVFS.

This sequence belongs to the WD repeat CORT family.

The protein localises to the cytoplasm. Its function is as follows. Controls wing pigmentation patterning, possibly by regulating scale cell development. Probably acts as an activator of the anaphase promoting complex/cyclosome (APC/C) that promotes the ubiquitin ligase activity and substrate specificity of the APC/C. The protein is Protein cortex of Biston betularia (Pepper-and-salt geometer moth).